We begin with the raw amino-acid sequence, 117 residues long: Large ribosomal subunit protein uL18 (117 aa).

Belongs to the universal ribosomal protein uL18 family. Part of the 50S ribosomal subunit; part of the 5S rRNA/L5/L18/L25 subcomplex. Contacts the 5S and 23S rRNAs.

In terms of biological role, this is one of the proteins that bind and probably mediate the attachment of the 5S RNA into the large ribosomal subunit, where it forms part of the central protuberance. This Vibrio atlanticus (strain LGP32) (Vibrio splendidus (strain Mel32)) protein is Large ribosomal subunit protein uL18.